A 111-amino-acid polypeptide reads, in one-letter code: UPF0060 membrane protein Ajs_1473 (111 aa).

The next 4 helical transmembrane spans lie at 8 to 28, 33 to 53, 65 to 85, and 88 to 108; these read ILFAVTAVAEIVGCYLPWLVV, SAWLLLPAAVSLSLFAWLLTL, YGGMYIAVALVWLHVVDGVAL, and WDFVGAAIALAGMSVIALQPA.

It belongs to the UPF0060 family.

It localises to the cell inner membrane. The polypeptide is UPF0060 membrane protein Ajs_1473 (Acidovorax sp. (strain JS42)).